A 604-amino-acid polypeptide reads, in one-letter code: ATPase family AAA domain-containing protein 3A homolog (604 aa).

The segment at 1–50 is disordered; that stretch reads MSWLLGRNRQQPQPDQTAGFSEGGGAADPEGRTAGEKSGDSQLSRAERKA. Polar residues predominate over residues 8–19; that stretch reads NRQQPQPDQTAG. Residues 29-50 are compositionally biased toward basic and acidic residues; the sequence is PEGRTAGEKSGDSQLSRAERKA. The stretch at 62–221 forms a coiled coil; it reads ERAADAAKTL…INLEKIRLKA (160 aa). 358–365 is a binding site for ATP; sequence GPPGTGKT.

In terms of assembly, can form homooligomers.

It localises to the mitochondrion inner membrane. It is found in the mitochondrion matrix. The protein localises to the mitochondrion nucleoid. Required to maintain the proper number of mitochondria in neurons and muscles. In Drosophila melanogaster (Fruit fly), this protein is ATPase family AAA domain-containing protein 3A homolog.